The following is a 188-amino-acid chain: UPF0398 protein ABC2016 (188 aa).

Belongs to the UPF0398 family.

This chain is UPF0398 protein ABC2016, found in Shouchella clausii (strain KSM-K16) (Alkalihalobacillus clausii).